The following is a 258-amino-acid chain: Hydroxypyruvate isomerase (258 aa).

Catalysis depends on proton donor/acceptor residues Glu143 and Glu240.

The protein belongs to the hyi family. Homodimer.

The enzyme catalyses 3-hydroxypyruvate = 2-hydroxy-3-oxopropanoate. With respect to regulation, not stimulated by addition of pyridoxal 5'-phosphate (0.1 mM), FAD, NAD(+), NADP(+) or ATP (1 mM each). EDTA (10 mM) and metal ions (1 mM) such as Ca(2+), Co(2+), Mg(2+), Ni(2+), Zn(2+) do not affect the enzyme activity. In terms of biological role, catalyzes the reversible isomerization between hydroxypyruvate and 2-hydroxy-3-oxopropanoate (also termed tartronate semialdehyde). Does not catalyze the isomerization of D-fructose to D-glucose or that of D-xylulose to D-xylose. Also does not catalyze racemization of serine, alanine, glycerate or lactate. In Escherichia coli (strain K12), this protein is Hydroxypyruvate isomerase (hyi).